We begin with the raw amino-acid sequence, 332 residues long: mRNA-decapping enzyme 1 (332 aa).

A compositionally biased stretch (low complexity) spans Ala141 to Pro173. The disordered stretch occupies residues Ala141–Ala175.

The protein belongs to the DCP1 family. May be a component of the decapping complex composed of dcap-1 and dcap-2. In terms of tissue distribution, expressed in neurons including touch receptor neurons and motor neurons.

The protein resides in the cytoplasm. Its subcellular location is the cytoplasmic granule. In terms of biological role, component of the decapping complex necessary for the degradation of mRNAs, both in normal mRNA turnover and in nonsense-mediated mRNA decay. In contrast to orthologs, does not possess decapping activity and does not remove the 7-methyl guanine cap structure from mRNA molecules. In the nervous system, negatively regulates the expression of insulin-like peptide ins-7, which in turn promotes longevity. This may in part be through promoting the activity of daf-16 in distal tissues. Required for the developmental axon guidance and regrowth of PLM touch receptor neurons. In ADL sensory neurons, plays a role in ciliary shape formation. Acts in neurons to promote larval survival at high temperatures by negatively regulating lin-14 expression. The polypeptide is mRNA-decapping enzyme 1 (Caenorhabditis elegans).